The sequence spans 707 residues: Translation initiation factor eIF2B subunit epsilon (707 aa).

Disordered regions lie at residues 489 to 526 (HDDI…SVKF) and 686 to 707 (AEEE…DESD). The region spanning 516 to 693 (DNPIEPDSVK…KSAEEESDDS (178 aa)) is the W2 domain. Positions 688 to 707 (EESDDSDDSDDDDDDSDESD) are enriched in acidic residues.

Belongs to the eIF-2B gamma/epsilon subunits family. In terms of assembly, component of the translation initiation factor 2B (eIF2B) complex which is a heterodecamer of two sets of five different subunits: alpha, beta, gamma, delta and epsilon. Subunits alpha, beta and delta comprise a regulatory subcomplex and subunits epsilon and gamma comprise a catalytic subcomplex. Within the complex, the hexameric regulatory complex resides at the center, with the two heterodimeric catalytic subcomplexes bound on opposite sides.

It is found in the cytoplasm. The protein resides in the cytosol. Acts as a component of the translation initiation factor 2B (eIF2B) complex, which catalyzes the exchange of GDP for GTP on eukaryotic initiation factor 2 (eIF2) gamma subunit. Its guanine nucleotide exchange factor activity is repressed when bound to eIF2 complex phosphorylated on the alpha subunit, thereby limiting the amount of methionyl-initiator methionine tRNA available to the ribosome and consequently global translation is repressed. This is Translation initiation factor eIF2B subunit epsilon (eif2b5) from Dictyostelium discoideum (Social amoeba).